The primary structure comprises 128 residues: Small ribosomal subunit protein eS8 (128 aa).

The protein belongs to the eukaryotic ribosomal protein eS8 family. Part of the 30S ribosomal subunit.

In Methanococcus maripaludis (strain C5 / ATCC BAA-1333), this protein is Small ribosomal subunit protein eS8.